Consider the following 144-residue polypeptide: FIMIKPDGVQRGLVGEIISRFEKKGFSLKGLKLITVDRAFAEKHYADLSAKPFFNGLVEYIVSGPVVAMVWEGKGVVATGRKIIGATNPLESAAGTIRGDFAIDIGRNVIHGSDAVESARKEIALWFPEGIAEWQSSLHSCIYE.

6 residues coordinate ATP: Lys-5, Phe-53, Arg-81, Thr-87, Arg-98, and Asn-108. The active-site Pros-phosphohistidine intermediate is His-111.

The protein belongs to the NDK family. Mg(2+) is required as a cofactor.

The enzyme catalyses a 2'-deoxyribonucleoside 5'-diphosphate + ATP = a 2'-deoxyribonucleoside 5'-triphosphate + ADP. It catalyses the reaction a ribonucleoside 5'-diphosphate + ATP = a ribonucleoside 5'-triphosphate + ADP. Major role in the synthesis of nucleoside triphosphates other than ATP. The ATP gamma phosphate is transferred to the NDP beta phosphate via a ping-pong mechanism, using a phosphorylated active-site intermediate. The sequence is that of Nucleoside diphosphate kinase from Solanum lycopersicum (Tomato).